Reading from the N-terminus, the 79-residue chain is ATP synthase subunit c (79 aa).

Transmembrane regions (helical) follow at residues methionine 11–leucine 31 and phenylalanine 53–tyrosine 73.

This sequence belongs to the ATPase C chain family. As to quaternary structure, F-type ATPases have 2 components, F(1) - the catalytic core - and F(0) - the membrane proton channel. F(1) has five subunits: alpha(3), beta(3), gamma(1), delta(1), epsilon(1). F(0) has three main subunits: a(1), b(2) and c(10-14). The alpha and beta chains form an alternating ring which encloses part of the gamma chain. F(1) is attached to F(0) by a central stalk formed by the gamma and epsilon chains, while a peripheral stalk is formed by the delta and b chains.

The protein localises to the cell inner membrane. Functionally, f(1)F(0) ATP synthase produces ATP from ADP in the presence of a proton or sodium gradient. F-type ATPases consist of two structural domains, F(1) containing the extramembraneous catalytic core and F(0) containing the membrane proton channel, linked together by a central stalk and a peripheral stalk. During catalysis, ATP synthesis in the catalytic domain of F(1) is coupled via a rotary mechanism of the central stalk subunits to proton translocation. In terms of biological role, key component of the F(0) channel; it plays a direct role in translocation across the membrane. A homomeric c-ring of between 10-14 subunits forms the central stalk rotor element with the F(1) delta and epsilon subunits. This Pectobacterium atrosepticum (strain SCRI 1043 / ATCC BAA-672) (Erwinia carotovora subsp. atroseptica) protein is ATP synthase subunit c.